The chain runs to 128 residues: Large-conductance mechanosensitive channel (128 aa).

2 helical membrane-spanning segments follow: residues 11 to 31 and 70 to 90; these read FALK…AAFG and GAFI…FIFV.

Belongs to the MscL family. Homopentamer.

The protein resides in the cell membrane. Channel that opens in response to stretch forces in the membrane lipid bilayer. May participate in the regulation of osmotic pressure changes within the cell. This is Large-conductance mechanosensitive channel from Listeria monocytogenes serotype 4b (strain CLIP80459).